The primary structure comprises 556 residues: Formate--tetrahydrofolate ligase (556 aa).

An ATP-binding site is contributed by Thr65–Ser72.

It belongs to the formate--tetrahydrofolate ligase family.

It carries out the reaction (6S)-5,6,7,8-tetrahydrofolate + formate + ATP = (6R)-10-formyltetrahydrofolate + ADP + phosphate. It functions in the pathway one-carbon metabolism; tetrahydrofolate interconversion. This is Formate--tetrahydrofolate ligase from Streptococcus thermophilus (strain CNRZ 1066).